Reading from the N-terminus, the 316-residue chain is Putative HTH-type transcriptional regulatory protein PYRAB03670 (316 aa).

The HTH cro/C1-type domain occupies 131–189 (LKDLREKHGYSLSELANILGVSRKSLQRYEKGDSMVTLEVALRLEEVFDEALVKPINVL). Positions 142–161 (LSELANILGVSRKSLQRYEK) form a DNA-binding region, H-T-H motif.

This chain is Putative HTH-type transcriptional regulatory protein PYRAB03670, found in Pyrococcus abyssi (strain GE5 / Orsay).